We begin with the raw amino-acid sequence, 515 residues long: Mucin-like protein Glc1.8b (515 aa).

Positions 1-20 are cleaved as a signal peptide; that stretch reads MSQITLIILVLAIGFSCTKS. Residues 21–467 are Extracellular-facing; the sequence is HPINSTRDGE…ANDIKKPAFP (447 aa). N-linked (GlcNAc...) asparagine; by host glycans are attached at residues Asn24, Asn45, Asn51, Asn60, Asn85, Asn93, Asn102, Asn123, Asn129, Asn138, Asn180, Asn201, Asn207, Asn216, Asn258, Asn279, Asn285, Asn294, Asn319, Asn327, Asn336, Asn357, Asn363, Asn372, Asn397, Asn405, Asn413, Asn434, and Asn441. The segment at 80–114 is disordered; the sequence is SKKDENITGQSEINTSAKSQPINSTRDGEDSGTDL. A compositionally biased stretch (polar residues) spans 86 to 104; it reads ITGQSEINTSAKSQPINST. Positions 314–358 are disordered; it reads SKKDENITGQSEINTSAKSQPINSTRDGEDSGTDLKNLLTDPANT. The span at 320–338 shows a compositional bias: polar residues; the sequence is ITGQSEINTSAKSQPINST. A disordered region spans residues 393–413; the sequence is RKDENVTGQSEFNISTNSNLN. A helical transmembrane segment spans residues 468 to 488; that stretch reads YCIILITFQIVTVGMIIYLVF. Over 489–515 the chain is Cytoplasmic; sequence RTMRKPCQSERAIPLNSFGFGNNSSYE.

Belongs to the polydnaviridae Glc1.8 protein family.

It is found in the host membrane. In terms of biological role, involved in suppression of the insect cellular immune response. Inhibits host hemocyte adhesion and phagocytosis. The polypeptide is Mucin-like protein Glc1.8b (O16) (Microplitis demolitor (Parasitoid wasp)).